The following is a 267-amino-acid chain: Undecaprenyl-diphosphatase (267 aa).

A run of 8 helical transmembrane segments spans residues 1–21 (MSYFEAFVLALIQGLTEFLPI), 39–59 (QGLAFDVAVHVGTLAAVVIYF), 83–103 (AKLAWMIVIATIPACIFGLVM), 111–131 (LRSAYVIATTTIIFGLLLWWV), 144–164 (AGWKKALFIGIAQALAMIPGT), 189–209 (FLMSIPIITLAGSYLGLKLVT), 218–238 (FLLTGIVTSFISAYLCIHLFL), and 246–266 (MTPFVIYRLILGVGLFAYLLM).

This sequence belongs to the UppP family.

It is found in the cell inner membrane. It carries out the reaction di-trans,octa-cis-undecaprenyl diphosphate + H2O = di-trans,octa-cis-undecaprenyl phosphate + phosphate + H(+). Functionally, catalyzes the dephosphorylation of undecaprenyl diphosphate (UPP). Confers resistance to bacitracin. The protein is Undecaprenyl-diphosphatase of Vibrio vulnificus (strain CMCP6).